A 242-amino-acid chain; its full sequence is Ferritin, mitochondrial (242 aa).

The transit peptide at 1 to 49 (MLSCFRLLSRHISPSLASLRPVRCCFALPLRWAPGRPLDPRQIAPRRPL) directs the protein to the mitochondrion. Residues 47–58 (RPLAAAASSRDP) are compositionally biased toward low complexity. The disordered stretch occupies residues 47–71 (RPLAAAASSRDPTGPAAGPSRVRQN). A Ferritin-like diiron domain is found at 70–219 (QNFHPDSEAA…DHVHNLVKMG (150 aa)). Residues Glu-87, Glu-122, His-125, Glu-167, and Gln-201 each coordinate Fe cation.

Belongs to the ferritin family. In terms of assembly, homooligomer of 24 subunits. The functional molecule is roughly spherical and contains a central cavity into which the polymeric mineral iron core is deposited. Detected in testis and erythroleukemia. Expression is very low or not detectable in brain, colon, heart, kidney, liver, lung, muscle, placental, spleen and small intestine.

Its subcellular location is the mitochondrion. It catalyses the reaction 4 Fe(2+) + O2 + 4 H(+) = 4 Fe(3+) + 2 H2O. In terms of biological role, catalyzes the oxidation of ferrous iron(II) to ferric iron(III) and stores iron in a soluble, non-toxic, readily available form. Important for iron homeostasis. Iron is taken up in the ferrous form and deposited as ferric hydroxides after oxidation. In Homo sapiens (Human), this protein is Ferritin, mitochondrial.